The following is a 696-amino-acid chain: Gametogenetin-binding protein 2 (696 aa).

Ser360 is modified (phosphoserine).

In terms of assembly, interacts with GGN.

Its subcellular location is the cytoplasmic vesicle. May be involved in spermatogenesis. This chain is Gametogenetin-binding protein 2 (Ggnbp2), found in Rattus norvegicus (Rat).